The chain runs to 665 residues: tRNA 5-methylaminomethyl-2-thiouridine biosynthesis bifunctional protein MnmC (665 aa).

Residues 1-235 (MTITRHAQID…KWEVLRGTFI (235 aa)) are tRNA (mnm(5)s(2)U34)-methyltransferase. Residues 266–665 (IGAGLAGCAT…RGKGKQTVGH (400 aa)) form an FAD-dependent cmnm(5)s(2)U34 oxidoreductase region.

It in the N-terminal section; belongs to the methyltransferase superfamily. tRNA (mnm(5)s(2)U34)-methyltransferase family. This sequence in the C-terminal section; belongs to the DAO family. The cofactor is FAD.

It is found in the cytoplasm. The catalysed reaction is 5-aminomethyl-2-thiouridine(34) in tRNA + S-adenosyl-L-methionine = 5-methylaminomethyl-2-thiouridine(34) in tRNA + S-adenosyl-L-homocysteine + H(+). Its function is as follows. Catalyzes the last two steps in the biosynthesis of 5-methylaminomethyl-2-thiouridine (mnm(5)s(2)U) at the wobble position (U34) in tRNA. Catalyzes the FAD-dependent demodification of cmnm(5)s(2)U34 to nm(5)s(2)U34, followed by the transfer of a methyl group from S-adenosyl-L-methionine to nm(5)s(2)U34, to form mnm(5)s(2)U34. In Pseudomonas syringae pv. syringae (strain B728a), this protein is tRNA 5-methylaminomethyl-2-thiouridine biosynthesis bifunctional protein MnmC.